A 308-amino-acid polypeptide reads, in one-letter code: tRNA pseudouridine synthase B (308 aa).

The active-site Nucleophile is the Asp46.

This sequence belongs to the pseudouridine synthase TruB family. Type 1 subfamily.

It carries out the reaction uridine(55) in tRNA = pseudouridine(55) in tRNA. Functionally, responsible for synthesis of pseudouridine from uracil-55 in the psi GC loop of transfer RNAs. In Marinomonas sp. (strain MWYL1), this protein is tRNA pseudouridine synthase B.